Reading from the N-terminus, the 208-residue chain is ATP synthase subunit beta, chloroplastic (208 aa).

This sequence belongs to the ATPase alpha/beta chains family. F-type ATPases have 2 components, CF(1) - the catalytic core - and CF(0) - the membrane proton channel. CF(1) has five subunits: alpha(3), beta(3), gamma(1), delta(1), epsilon(1). CF(0) has four main subunits: a(1), b(1), b'(1) and c(9-12).

The protein localises to the plastid. It localises to the chloroplast thylakoid membrane. It catalyses the reaction ATP + H2O + 4 H(+)(in) = ADP + phosphate + 5 H(+)(out). In terms of biological role, produces ATP from ADP in the presence of a proton gradient across the membrane. The catalytic sites are hosted primarily by the beta subunits. The protein is ATP synthase subunit beta, chloroplastic (atpB) of Lonchitis hirsuta (Tomato fern).